We begin with the raw amino-acid sequence, 275 residues long: 4-diphosphocytidyl-2-C-methyl-D-erythritol kinase (275 aa).

Lys14 is an active-site residue. 98-108 (PMGAGLGGGSS) serves as a coordination point for ATP. Residue Asp140 is part of the active site.

It belongs to the GHMP kinase family. IspE subfamily.

It catalyses the reaction 4-CDP-2-C-methyl-D-erythritol + ATP = 4-CDP-2-C-methyl-D-erythritol 2-phosphate + ADP + H(+). It participates in isoprenoid biosynthesis; isopentenyl diphosphate biosynthesis via DXP pathway; isopentenyl diphosphate from 1-deoxy-D-xylulose 5-phosphate: step 3/6. Functionally, catalyzes the phosphorylation of the position 2 hydroxy group of 4-diphosphocytidyl-2C-methyl-D-erythritol. This chain is 4-diphosphocytidyl-2-C-methyl-D-erythritol kinase, found in Francisella philomiragia subsp. philomiragia (strain ATCC 25017 / CCUG 19701 / FSC 153 / O#319-036).